A 369-amino-acid polypeptide reads, in one-letter code: Choline-phosphate cytidylyltransferase B (369 aa).

Residues 1–27 form a disordered region; the sequence is MPVLTTDAESETGIPKSLSNEPPSETM. The CTP site is built by I84, F85, H92, and K122. Positions 122 and 151 each coordinate phosphocholine. The CTP site is built by H168, D169, Y173, Q195, R196, T197, and I200. The disordered stretch occupies residues 309-369; the sequence is RMLQALSPKQ…SMSEGDEDEK (61 aa). Phosphoserine occurs at positions 315, 319, 322, 323, 329, 331, and 335. A compositionally biased stretch (low complexity) spans 319 to 339; the sequence is SPVSSPTRSRSPSRSPSPTFS. A Phosphothreonine modification is found at T345. 6 positions are modified to phosphoserine: S346, S349, S350, S355, S360, and S362. The span at 351–362 shows a compositional bias: low complexity; sequence PKAASASISSMS.

This sequence belongs to the cytidylyltransferase family. In terms of assembly, homodimer. In terms of tissue distribution, highly expressed in brain (at protein level). Expressed in liver (at protein level). Expressed at lower levels in lung and gonads. Expressed in brain (at protein level). Expressed at lower levels in lung and gonads.

The protein localises to the endoplasmic reticulum. It localises to the cytoplasm. The enzyme catalyses phosphocholine + CTP + H(+) = CDP-choline + diphosphate. It functions in the pathway phospholipid metabolism; phosphatidylcholine biosynthesis; phosphatidylcholine from phosphocholine: step 1/2. Functionally, catalyzes the key rate-limiting step in the CDP-choline pathway for phosphatidylcholine biosynthesis. Plays an important role in ovary maturation and the maintenance of sperm production. Its function is as follows. Catalyzes the key rate-limiting step in the CDP-choline pathway for phosphatidylcholine biosynthesis. This Mus musculus (Mouse) protein is Choline-phosphate cytidylyltransferase B (Pcyt1b).